A 463-amino-acid polypeptide reads, in one-letter code: Argininosuccinate lyase (463 aa).

The protein belongs to the lyase 1 family. Argininosuccinate lyase subfamily.

It localises to the cytoplasm. The catalysed reaction is 2-(N(omega)-L-arginino)succinate = fumarate + L-arginine. It participates in amino-acid biosynthesis; L-arginine biosynthesis; L-arginine from L-ornithine and carbamoyl phosphate: step 3/3. In Ruegeria pomeroyi (strain ATCC 700808 / DSM 15171 / DSS-3) (Silicibacter pomeroyi), this protein is Argininosuccinate lyase.